The following is a 331-amino-acid chain: Tagatose 1,6-diphosphate aldolase 2 (331 aa).

It belongs to the aldolase LacD family.

The enzyme catalyses D-tagatofuranose 1,6-bisphosphate = D-glyceraldehyde 3-phosphate + dihydroxyacetone phosphate. Its pathway is carbohydrate metabolism; D-tagatose 6-phosphate degradation; D-glyceraldehyde 3-phosphate and glycerone phosphate from D-tagatose 6-phosphate: step 2/2. This is Tagatose 1,6-diphosphate aldolase 2 (lacD2) from Enterococcus faecalis (strain ATCC 700802 / V583).